We begin with the raw amino-acid sequence, 471 residues long: Nuclear receptor subfamily 0 group B member 1 (471 aa).

Tandem repeats lie at residues 1 to 67 (MAGE…YRCC), 68 to 134 (FCGE…YRCC), and 135 to 201 (FCGE…YRCC). Residues 1 to 253 (MAGEDHQWQG…QRVALKSPQV (253 aa)) form a 4 X 67 AA tandem repeats region. Short sequence motifs (LXXLL motif) lie at residues 13-17 (LYNML), 80-84 (LYNML), and 147-151 (LYSLL). Residues 202–253 (FCGEDHPRQSGILCNMPMSAKQTHVAPEAQPGAPWWDPSCAAQRVALKSPQV) form a 4; truncated repeat. The 261-residue stretch at 210 to 470 (QSGILCNMPM…DMMLEMLCAK (261 aa)) folds into the NR LBD domain. Residues 462–467 (MMLEML) carry the AF-2 motif motif.

This sequence belongs to the nuclear hormone receptor family. NR0 subfamily. Homodimer. Interacts with NR5A1, NR5A2, NR0B2 and with COPS2. Interacts with ESRRB; represses ESRRB activity at the GATA6 promoter.

Its subcellular location is the nucleus. It is found in the cytoplasm. In terms of biological role, nuclear receptor that lacks a DNA-binding domain and acts as a corepressor that inhibits the transcriptional activity of other nuclear receptors through heterodimeric interactions. Component of a cascade required for the development of the hypothalamic-pituitary-adrenal-gonadal axis. May also have a role in the development of the embryo and in the maintenance of embryonic stem cell pluripotency. This Sus scrofa (Pig) protein is Nuclear receptor subfamily 0 group B member 1 (NR0B1).